We begin with the raw amino-acid sequence, 692 residues long: Proprotein convertase subtilisin/kexin type 9 (692 aa).

A signal peptide spans 1–30; it reads MGTVSSRRSWWPLPLPLLLLLLLGPAGARA. A propeptide spanning residues 31–152 is cleaved from the precursor; it reads QEDEDGDYEE…IEEDSSVFAQ (122 aa). Y38 bears the Sulfotyrosine mark. Phosphoserine is present on S47. The 73-residue stretch at 77-149 folds into the Inhibitor I9 domain; it reads TYVVVLKEET…VDYIEEDSSV (73 aa). A Peptidase S8 domain is found at 155-444; sequence PWNLERITPA…VLTPNLVAAL (290 aa). Active-site charge relay system residues include D186 and H226. 2 disulfides stabilise this stretch: C223–C255 and C323–C358. Catalysis depends on S386, which acts as the Charge relay system. The segment at 450–692 is C-terminal domain; it reads RAGWQLFCRT…HLVQASQELQ (243 aa). Intrachain disulfides connect C457-C527, C477-C526, and C486-C509. The N-linked (GlcNAc...) asparagine glycan is linked to N533. Intrachain disulfides connect C534–C601, C552–C600, C562–C588, C608–C679, C626–C678, and C635–C654. S688 bears the Phosphoserine mark.

The protein belongs to the peptidase S8 family. As to quaternary structure, monomer. Can self-associate to form dimers and higher multimers which may have increased LDLR degrading activity. The precursor protein but not the mature protein may form multimers. Interacts with APOB, VLDLR, LRP8/APOER2 and BACE1. The full-length immature form (pro-PCSK9) interacts with SCNN1A, SCNN1B and SCNN1G. The pro-PCSK9 form (via C-terminal domain) interacts with LDLR. Interacts (via the C-terminal domain) with ANXA2 (via repeat Annexin 1); the interaction inhibits the degradation of LDLR. Ca(2+) is required as a cofactor. Post-translationally, cleavage by furin and PCSK5 generates a truncated inactive protein that is unable to induce LDLR degradation. In terms of processing, undergoes autocatalytic cleavage in the endoplasmic reticulum to release the propeptide from the N-terminus and the cleavage of the propeptide is strictly required for its maturation and activation. The cleaved propeptide however remains associated with the catalytic domain through non-covalent interactions, preventing potential substrates from accessing its active site. As a result, it is secreted from cells as a propeptide-containing, enzymatically inactive protein. Phosphorylation protects the propeptide against proteolysis.

It is found in the cytoplasm. The protein resides in the secreted. The protein localises to the endosome. Its subcellular location is the lysosome. It localises to the cell surface. It is found in the endoplasmic reticulum. The protein resides in the golgi apparatus. Its proteolytic activity is autoinhibited by the non-covalent binding of the propeptide to the catalytic domain. Inhibited by EGTA. Functionally, crucial player in the regulation of plasma cholesterol homeostasis. Binds to low-density lipid receptor family members: low density lipoprotein receptor (LDLR), very low density lipoprotein receptor (VLDLR), apolipoprotein E receptor (LRP1/APOER) and apolipoprotein receptor 2 (LRP8/APOER2), and promotes their degradation in intracellular acidic compartments. Acts via a non-proteolytic mechanism to enhance the degradation of the hepatic LDLR through a clathrin LDLRAP1/ARH-mediated pathway. May prevent the recycling of LDLR from endosomes to the cell surface or direct it to lysosomes for degradation. Can induce ubiquitination of LDLR leading to its subsequent degradation. Inhibits intracellular degradation of APOB via the autophagosome/lysosome pathway in a LDLR-independent manner. Involved in the disposal of non-acetylated intermediates of BACE1 in the early secretory pathway. Inhibits epithelial Na(+) channel (ENaC)-mediated Na(+) absorption by reducing ENaC surface expression primarily by increasing its proteasomal degradation. Regulates neuronal apoptosis via modulation of LRP8/APOER2 levels and related anti-apoptotic signaling pathways. The protein is Proprotein convertase subtilisin/kexin type 9 (PCSK9) of Macaca mulatta (Rhesus macaque).